The sequence spans 353 residues: MKVVEKDLDKGYIEVLPETLDDLWHLYHVVRKGDLVFALERRRVKDERAETIRRDKGERKPVYLGVRVEDVEFDKYANRLRIKGVIEHGPESGSHHTVNVTTGKRIKIVKDEWERKDLERIEEAEMSRPPVMLVAVDTGEGTIGIVRDYGLDVVARVRHNVPGKRGGDRRAEMRKFFHRLADEIERIAEEEGVEHIVVGGPGFVKSDFAEFLREERDIPAHVEDTGSAGEAGLIEMIRRGAVERAVEESRVAEEVKHLEEVFKRIGKGDDKVAYGVRECLKAAEFGAIDVLLVADEKFREAMVEGEEDVLNAVKYAERTGAEVLIVSTEHEWGERLRELGGIAALLRFSIPTG.

The protein belongs to the eukaryotic release factor 1 family. Pelota subfamily. In terms of assembly, monomer. The cofactor is a divalent metal cation.

The protein localises to the cytoplasm. In terms of biological role, may function in recognizing stalled ribosomes, interact with stem-loop structures in stalled mRNA molecules, and effect endonucleolytic cleavage of the mRNA. May play a role in the release non-functional ribosomes and degradation of damaged mRNAs. Has endoribonuclease activity. The protein is Protein pelota homolog of Methanopyrus kandleri (strain AV19 / DSM 6324 / JCM 9639 / NBRC 100938).